The sequence spans 305 residues: Tyrosine recombinase XerC (305 aa).

The Core-binding (CB) domain occupies 1–93 (MVLDGFAAHF…SWRQYCVWLV (93 aa)). Residues 114-294 (RVPKALPQEW…DFDHIARLYD (181 aa)) enclose the Tyr recombinase domain. Catalysis depends on residues Arg155, Lys179, His246, Arg249, and His272. Tyr281 acts as the O-(3'-phospho-DNA)-tyrosine intermediate in catalysis.

Belongs to the 'phage' integrase family. XerC subfamily. Forms a cyclic heterotetrameric complex composed of two molecules of XerC and two molecules of XerD.

It is found in the cytoplasm. In terms of biological role, site-specific tyrosine recombinase, which acts by catalyzing the cutting and rejoining of the recombining DNA molecules. The XerC-XerD complex is essential to convert dimers of the bacterial chromosome into monomers to permit their segregation at cell division. It also contributes to the segregational stability of plasmids. This chain is Tyrosine recombinase XerC, found in Neisseria meningitidis serogroup C / serotype 2a (strain ATCC 700532 / DSM 15464 / FAM18).